The following is a 202-amino-acid chain: Holliday junction resolvase RecU (202 aa).

Threonine 85, aspartate 87, glutamate 100, and glutamine 119 together coordinate Mg(2+).

It belongs to the RecU family. Mg(2+) is required as a cofactor.

Its subcellular location is the cytoplasm. The enzyme catalyses Endonucleolytic cleavage at a junction such as a reciprocal single-stranded crossover between two homologous DNA duplexes (Holliday junction).. Endonuclease that resolves Holliday junction intermediates in genetic recombination. Cleaves mobile four-strand junctions by introducing symmetrical nicks in paired strands. Promotes annealing of linear ssDNA with homologous dsDNA. Required for DNA repair, homologous recombination and chromosome segregation. The sequence is that of Holliday junction resolvase RecU from Streptococcus equi subsp. equi (strain 4047).